A 239-amino-acid chain; its full sequence is Uridylate kinase (239 aa).

12–15 (KLSG) contacts ATP. The involved in allosteric activation by GTP stretch occupies residues 20–25 (GDQGAG). G54 serves as a coordination point for UMP. Residues G55 and R59 each contribute to the ATP site. Residues D74 and 135–142 (TGNPFFTT) each bind UMP. ATP is bound by residues T162, Y168, and D171.

This sequence belongs to the UMP kinase family. As to quaternary structure, homohexamer.

The protein resides in the cytoplasm. The catalysed reaction is UMP + ATP = UDP + ADP. It functions in the pathway pyrimidine metabolism; CTP biosynthesis via de novo pathway; UDP from UMP (UMPK route): step 1/1. Allosterically activated by GTP. Inhibited by UTP. In terms of biological role, catalyzes the reversible phosphorylation of UMP to UDP. This chain is Uridylate kinase, found in Methylococcus capsulatus (strain ATCC 33009 / NCIMB 11132 / Bath).